The primary structure comprises 471 residues: Actin-related protein 8 (471 aa).

Positions 40–86 (LGAFDQLPMDILVQILMMMEPKDAVKLGLTCKAWKCVASGNRLWIFY) constitute an F-box domain. Position 256 to 259 (256 to 259 (NIGF)) interacts with ATP.

It belongs to the actin family. Plant ARP8 subfamily. In terms of tissue distribution, ubiquitously expressed in all organs and cell types. Higher expression in seedlings.

It is found in the nucleus. The protein localises to the nucleolus. It localises to the cytoplasm. The sequence is that of Actin-related protein 8 (ARP8) from Arabidopsis thaliana (Mouse-ear cress).